A 398-amino-acid chain; its full sequence is ATP-dependent (S)-NAD(P)H-hydrate dehydratase 1 (398 aa).

Positions 80 to 391 constitute a YjeF C-terminal domain; it reads LLRKAFQMIP…GYIGEAFELV (312 aa). (6S)-NADPHX contacts are provided by residues G187 and 240–246; that span reads NHVEFQR. ATP contacts are provided by residues 280-284 and 300-309; these read KGSID and GSPKRCGGQG. D310 is a (6S)-NADPHX binding site.

Belongs to the NnrD/CARKD family. It depends on Mg(2+) as a cofactor.

Its subcellular location is the cytoplasm. It carries out the reaction (6S)-NADHX + ATP = ADP + phosphate + NADH + H(+). The enzyme catalyses (6S)-NADPHX + ATP = ADP + phosphate + NADPH + H(+). In terms of biological role, catalyzes the dehydration of the S-form of NAD(P)HX at the expense of ATP, which is converted to ADP. Together with NAD(P)HX epimerase, which catalyzes the epimerization of the S- and R-forms, the enzyme allows the repair of both epimers of NAD(P)HX, a damaged form of NAD(P)H that is a result of enzymatic or heat-dependent hydration. The protein is ATP-dependent (S)-NAD(P)H-hydrate dehydratase 1 of Puccinia graminis f. sp. tritici (strain CRL 75-36-700-3 / race SCCL) (Black stem rust fungus).